The sequence spans 233 residues: PEP2-like protein NECHADRAFT_97050 (233 aa).

This sequence belongs to the PEP2 family.

Functionally, may contribute to the ability of the fungus to cause disease on pea plants. The sequence is that of PEP2-like protein NECHADRAFT_97050 from Fusarium vanettenii (strain ATCC MYA-4622 / CBS 123669 / FGSC 9596 / NRRL 45880 / 77-13-4) (Fusarium solani subsp. pisi).